Reading from the N-terminus, the 60-residue chain is Large ribosomal subunit protein bL33 (60 aa).

It belongs to the bacterial ribosomal protein bL33 family.

The chain is Large ribosomal subunit protein bL33 from Pelodictyon phaeoclathratiforme (strain DSM 5477 / BU-1).